A 162-amino-acid polypeptide reads, in one-letter code: Probable chemoreceptor glutamine deamidase CheD (162 aa).

It belongs to the CheD family.

It catalyses the reaction L-glutaminyl-[protein] + H2O = L-glutamyl-[protein] + NH4(+). Functionally, probably deamidates glutamine residues to glutamate on methyl-accepting chemotaxis receptors (MCPs), playing an important role in chemotaxis. This Clostridium botulinum (strain Eklund 17B / Type B) protein is Probable chemoreceptor glutamine deamidase CheD.